The primary structure comprises 458 residues: COBRA-like protein 2 (458 aa).

The N-terminal stretch at 1–29 (MARFLLGAAAIALLAGVSSLLLMVPFAEA) is a signal peptide. N38, N163, N171, N211, N236, N318, N333, and N352 each carry an N-linked (GlcNAc...) asparagine glycan. The chain crosses the membrane as a helical span at residues 430 to 450 (VFLLMSFLVCGTLAFLHNHLV).

The protein belongs to the COBRA family.

The protein localises to the membrane. The sequence is that of COBRA-like protein 2 (BC1L2) from Oryza sativa subsp. japonica (Rice).